Here is an 89-residue protein sequence, read N- to C-terminus: Small ribosomal subunit protein uS14 (89 aa).

It belongs to the universal ribosomal protein uS14 family. Part of the 30S ribosomal subunit. Contacts proteins S3 and S10.

Functionally, binds 16S rRNA, required for the assembly of 30S particles and may also be responsible for determining the conformation of the 16S rRNA at the A site. In Leuconostoc mesenteroides subsp. mesenteroides (strain ATCC 8293 / DSM 20343 / BCRC 11652 / CCM 1803 / JCM 6124 / NCDO 523 / NBRC 100496 / NCIMB 8023 / NCTC 12954 / NRRL B-1118 / 37Y), this protein is Small ribosomal subunit protein uS14.